The primary structure comprises 444 residues: Acyl-CoA 6-desaturase (444 aa).

Residues 1-21 form a disordered region; sequence MGKGGNQGEGSTERQAPMPTF. The Cytoplasmic portion of the chain corresponds to 1–130; that stretch reads MGKGGNQGEG…EDMNLFKTNH (130 aa). One can recognise a Cytochrome b5 heme-binding domain in the interval 18 to 95; it reads MPTFRWEEIQ…LKPLLIGELA (78 aa). A helical membrane pass occupies residues 131–151; the sequence is LFFFLLLSHIIVMESLAWFIL. A topological domain (lumenal) is located at residue Ser-152. The chain crosses the membrane as a helical span at residues 153–173; sequence YFGTGWIPTLVTAFVLATSQA. Residues 174 to 264 lie on the Cytoplasmic side of the membrane; the sequence is QAGWLQHDYG…KYLPYNHQHE (91 aa). The short motif at 180–184 is the Histidine box-1 element; sequence HDYGH. Residues 217 to 221 carry the Histidine box-2 motif; that stretch reads HFQHH. A helical membrane pass occupies residues 265–285; the sequence is YFFLIGPPLLIPMYFQYQIIM. Residues 286–305 are Lumenal-facing; the sequence is TMISRRDWVDLAWAISYYMR. A helical transmembrane segment spans residues 306 to 326; it reads FFYTYIPFYGILGALVFLNFI. The Cytoplasmic portion of the chain corresponds to 327–444; the sequence is RFLESHWFVW…ELWLDAYLHK (118 aa). A Histidine box-3 motif is present at residues 382–386; sequence QIEHH.

Belongs to the fatty acid desaturase type 1 family. Highly expressed in the adrenal gland, liver, brain, and testis, tissues where lipogenesis and steroidogenesis are active. Also detected in lung, heart, and skeletal muscle.

The protein localises to the endoplasmic reticulum membrane. The enzyme catalyses (9Z,12Z)-octadecadienoyl-CoA + 2 Fe(II)-[cytochrome b5] + O2 + 2 H(+) = (6Z,9Z,12Z)-octadecatrienoyl-CoA + 2 Fe(III)-[cytochrome b5] + 2 H2O. It carries out the reaction (9Z,12Z,15Z)-octadecatrienoyl-CoA + 2 Fe(II)-[cytochrome b5] + O2 + 2 H(+) = (6Z,9Z,12Z,15Z)-octadecatetraenoyl-CoA + 2 Fe(III)-[cytochrome b5] + 2 H2O. It catalyses the reaction (9Z,12Z,15Z,18Z,21Z)-tetracosapentaenoyl-CoA + 2 Fe(II)-[cytochrome b5] + O2 + 2 H(+) = (6Z,9Z,12Z,15Z,18Z,21Z)-tetracosahexaenoyl-CoA + 2 Fe(III)-[cytochrome b5] + 2 H2O. The catalysed reaction is (11E)-octadecenoyl-CoA + 2 Fe(II)-[cytochrome b5] + O2 + 2 H(+) = (6Z,11E)-octadecadienoyl-CoA + 2 Fe(III)-[cytochrome b5] + 2 H2O. The enzyme catalyses (11Z,14Z)-eicosadienoyl-CoA + 2 Fe(II)-[cytochrome b5] + O2 + 2 H(+) = (8Z,11Z,14Z)-eicosatrienoyl-CoA + 2 Fe(III)-[cytochrome b5] + 2 H2O. It carries out the reaction (11Z,14Z,17Z)-eicosatrienoyl-CoA + 2 Fe(II)-[cytochrome b5] + O2 + 2 H(+) = (8Z,11Z,14Z,17Z)-eicosatetraenoyl-CoA + 2 Fe(III)-[cytochrome b5] + 2 H2O. It functions in the pathway lipid metabolism; polyunsaturated fatty acid biosynthesis. Functionally, involved in the biosynthesis of highly unsaturated fatty acids (HUFA) from the essential polyunsaturated fatty acids (PUFA) linoleic acid (LA) (18:2n-6) and alpha-linolenic acid (ALA) (18:3n-3) precursors, acting as a fatty acyl-coenzyme A (CoA) desaturase that introduces a cis double bond at carbon 6 of the fatty acyl chain. Catalyzes the first and rate limiting step in this pathway which is the desaturation of LA (18:2n-6) and ALA (18:3n-3) into gamma-linoleate (GLA) (18:3n-6) and stearidonate (18:4n-3), respectively. Subsequently, in the biosynthetic pathway of HUFA n-3 series, it desaturates tetracosapentaenoate (24:5n-3) to tetracosahexaenoate (24:6n-3), which is then converted to docosahexaenoate (DHA)(22:6n-3), an important lipid for nervous system function. It can also desaturate (11E)-octadecenoate (trans-vaccenoate) at carbon 6 generating (6Z,11E)-octadecadienoate. In addition to Delta-6 activity, this enzyme exhibits Delta-8 activity with slight biases toward n-3 fatty acyl-CoA substrates. The sequence is that of Acyl-CoA 6-desaturase from Mus musculus (Mouse).